Reading from the N-terminus, the 576-residue chain is Arginine--tRNA ligase (576 aa).

The 'HIGH' region motif lies at 122-132; the sequence is PNVAKQMHVGH.

It belongs to the class-I aminoacyl-tRNA synthetase family. As to quaternary structure, monomer.

It is found in the cytoplasm. The enzyme catalyses tRNA(Arg) + L-arginine + ATP = L-arginyl-tRNA(Arg) + AMP + diphosphate. This chain is Arginine--tRNA ligase, found in Photorhabdus laumondii subsp. laumondii (strain DSM 15139 / CIP 105565 / TT01) (Photorhabdus luminescens subsp. laumondii).